An 838-amino-acid chain; its full sequence is Histidine biosynthesis trifunctional protein (838 aa).

The interval 1–271 is phosphoribosyl-AMP cyclohydrolase; that stretch reads MIFPILPVIS…MVEPRTGYGF (271 aa). The segment at 272 to 360 is phosphoribosyl-ATP pyrophosphohydrolase; the sequence is CHRETKFTCF…VYFAMVWCIK (89 aa). Positions 361–838 are histidinol dehydrogenase; the sequence is HGVRLADIEK…IRMERMAETK (478 aa). 2 residues coordinate Zn(2+): glutamine 660 and histidine 663. Catalysis depends on residues glutamate 729 and histidine 730. Residues aspartate 764 and histidine 823 each contribute to the Zn(2+) site.

The protein in the C-terminal section; belongs to the histidinol dehydrogenase family. The cofactor is Zn(2+).

The enzyme catalyses 1-(5-phospho-beta-D-ribosyl)-5'-AMP + H2O = 1-(5-phospho-beta-D-ribosyl)-5-[(5-phospho-beta-D-ribosylamino)methylideneamino]imidazole-4-carboxamide. It catalyses the reaction 1-(5-phospho-beta-D-ribosyl)-ATP + H2O = 1-(5-phospho-beta-D-ribosyl)-5'-AMP + diphosphate + H(+). It carries out the reaction L-histidinol + 2 NAD(+) + H2O = L-histidine + 2 NADH + 3 H(+). It functions in the pathway amino-acid biosynthesis; L-histidine biosynthesis; L-histidine from 5-phospho-alpha-D-ribose 1-diphosphate: step 2/9. It participates in amino-acid biosynthesis; L-histidine biosynthesis; L-histidine from 5-phospho-alpha-D-ribose 1-diphosphate: step 3/9. The protein operates within amino-acid biosynthesis; L-histidine biosynthesis; L-histidine from 5-phospho-alpha-D-ribose 1-diphosphate: step 9/9. This Candida albicans (Yeast) protein is Histidine biosynthesis trifunctional protein (HIS4).